A 356-amino-acid chain; its full sequence is Tyrosine recombinase XerS (356 aa).

In terms of domain architecture, Core-binding (CB) spans 16–121 (IMPWYVLDYY…ALSSLYKYLT (106 aa)). The Tyr recombinase domain occupies 169–354 (AFLDYVDKEY…VNDEQKNALD (186 aa)). Catalysis depends on residues Arg-210, Lys-234, His-306, Arg-309, and His-332. Tyr-341 (O-(3'-phospho-DNA)-tyrosine intermediate) is an active-site residue.

The protein belongs to the 'phage' integrase family. XerS subfamily.

The protein resides in the cytoplasm. Its activity is regulated as follows. FtsK is required for recombination. Its function is as follows. Site-specific tyrosine recombinase, which acts by catalyzing the cutting and rejoining of the recombining DNA molecules. Essential to convert dimers of the bacterial chromosome into monomers to permit their segregation at cell division. This Streptococcus pyogenes serotype M5 (strain Manfredo) protein is Tyrosine recombinase XerS.